We begin with the raw amino-acid sequence, 418 residues long: Putative L-glutamine:3-amino-2,3-dideoxy-scyllo-inosose aminotransferase (418 aa).

Lys199 bears the N6-(pyridoxal phosphate)lysine mark.

This sequence belongs to the DegT/DnrJ/EryC1 family. L-glutamine:2-deoxy-scyllo-inosose/scyllo-inosose aminotransferase subfamily. The cofactor is pyridoxal 5'-phosphate.

It carries out the reaction 3-amino-2,3-dideoxy-scyllo-inosose + L-glutamine = 2-deoxystreptamine + 2-oxoglutaramate. The protein operates within metabolic intermediate biosynthesis; 2-deoxystreptamine biosynthesis; 2-deoxystreptamine from D-glucose 6-phosphate: step 4/4. It participates in antibiotic biosynthesis; gentamicin biosynthesis. Catalyzes the transamination of 3-amino-2,3-dideoxy-scyllo-inosose (amino-DOI) into 2-deoxystreptamine (DOS). The sequence is that of Putative L-glutamine:3-amino-2,3-dideoxy-scyllo-inosose aminotransferase (gtmD) from Micromonospora echinospora (Micromonospora purpurea).